A 177-amino-acid polypeptide reads, in one-letter code: Large ribosomal subunit protein uL6 (177 aa).

Belongs to the universal ribosomal protein uL6 family. In terms of assembly, part of the 50S ribosomal subunit.

In terms of biological role, this protein binds to the 23S rRNA, and is important in its secondary structure. It is located near the subunit interface in the base of the L7/L12 stalk, and near the tRNA binding site of the peptidyltransferase center. In Shewanella denitrificans (strain OS217 / ATCC BAA-1090 / DSM 15013), this protein is Large ribosomal subunit protein uL6.